Here is a 475-residue protein sequence, read N- to C-terminus: Argininosuccinate lyase (475 aa).

The protein belongs to the lyase 1 family. Argininosuccinate lyase subfamily.

Its subcellular location is the cytoplasm. The catalysed reaction is 2-(N(omega)-L-arginino)succinate = fumarate + L-arginine. The protein operates within amino-acid biosynthesis; L-arginine biosynthesis; L-arginine from L-ornithine and carbamoyl phosphate: step 3/3. In Leifsonia xyli subsp. xyli (strain CTCB07), this protein is Argininosuccinate lyase.